The chain runs to 116 residues: Large ribosomal subunit protein uL24 (116 aa).

This sequence belongs to the universal ribosomal protein uL24 family. In terms of assembly, part of the 50S ribosomal subunit.

One of two assembly initiator proteins, it binds directly to the 5'-end of the 23S rRNA, where it nucleates assembly of the 50S subunit. In terms of biological role, located at the polypeptide exit tunnel on the outside of the subunit. This Methanothrix thermoacetophila (strain DSM 6194 / JCM 14653 / NBRC 101360 / PT) (Methanosaeta thermophila) protein is Large ribosomal subunit protein uL24.